The chain runs to 859 residues: Leucine--tRNA ligase (859 aa).

A 'HIGH' region motif is present at residues 42–52 (PYPSGRLHMGH). The short motif at 618–622 (KMSKS) is the 'KMSKS' region element. Lysine 621 contributes to the ATP binding site.

It belongs to the class-I aminoacyl-tRNA synthetase family.

It localises to the cytoplasm. It carries out the reaction tRNA(Leu) + L-leucine + ATP = L-leucyl-tRNA(Leu) + AMP + diphosphate. The protein is Leucine--tRNA ligase of Shewanella baltica (strain OS195).